The following is a 335-amino-acid chain: Nucleoid-associated protein PputW619_4243 (335 aa).

The protein belongs to the YejK family.

The protein localises to the cytoplasm. Its subcellular location is the nucleoid. The chain is Nucleoid-associated protein PputW619_4243 from Pseudomonas putida (strain W619).